A 248-amino-acid chain; its full sequence is tRNA pseudouridine synthase A (248 aa).

Residue Asp53 is the Nucleophile of the active site. Tyr111 provides a ligand contact to substrate.

This sequence belongs to the tRNA pseudouridine synthase TruA family. As to quaternary structure, homodimer.

It carries out the reaction uridine(38/39/40) in tRNA = pseudouridine(38/39/40) in tRNA. Functionally, formation of pseudouridine at positions 38, 39 and 40 in the anticodon stem and loop of transfer RNAs. In Streptococcus thermophilus (strain ATCC BAA-491 / LMD-9), this protein is tRNA pseudouridine synthase A.